We begin with the raw amino-acid sequence, 350 residues long: uncharacterized protein (350 aa).

The interval 330 to 350 is disordered; it reads RHPGDLRSEPHYRPSAKLAEF. Over residues 331-341 the composition is skewed to basic and acidic residues; that stretch reads HPGDLRSEPHY.

This is an uncharacterized protein from Mycobacterium tuberculosis.